Here is a 696-residue protein sequence, read N- to C-terminus: Polyribonucleotide nucleotidyltransferase (696 aa).

Mg(2+) contacts are provided by aspartate 483 and aspartate 489. The KH domain maps to 550 to 609; the sequence is PRITTIYVKTDKIRDVIGSGGKNIRGITEATGVTIDIDDTGKINIASTDKAACDLAIKMI. Positions 619 to 687 constitute an S1 motif domain; it reads GKLYMGLVKK…KQGKIKLSRK (69 aa).

This sequence belongs to the polyribonucleotide nucleotidyltransferase family. The cofactor is Mg(2+).

Its subcellular location is the cytoplasm. The enzyme catalyses RNA(n+1) + phosphate = RNA(n) + a ribonucleoside 5'-diphosphate. Involved in mRNA degradation. Catalyzes the phosphorolysis of single-stranded polyribonucleotides processively in the 3'- to 5'-direction. The protein is Polyribonucleotide nucleotidyltransferase of Geotalea uraniireducens (strain Rf4) (Geobacter uraniireducens).